The chain runs to 76 residues: Proteolipid protein 2 (76 aa).

The MARVEL domain occupies 1 to 60 (ISGPWSDFFRALGAVILYLMTSIVVLVERGNNSKGAAGVLGLCAAGLFGYDAYITFPSGT). The helical transmembrane segment at 8–28 (FFRALGAVILYLMTSIVVLVE) threads the bilayer. N31 is a glycosylation site (N-linked (GlcNAc...) asparagine). Residues 36–56 (AAGVLGLCAAGLFGYDAYITF) form a helical membrane-spanning segment.

The protein resides in the membrane. Functionally, may play a role in cell differentiation in the intestinal epithelium. The chain is Proteolipid protein 2 (PLP2) from Ovis aries (Sheep).